A 574-amino-acid polypeptide reads, in one-letter code: MTLKDIPFWRVLLIFQTARVYAGFGDPREAITMIHQQHGKPCDCAGGYVNAAPTVYLAAVSCSSHTAYQPSDSLKWRCVSNPTLANGENIGNCPCKTFKESVHSSCYTAYQECFFGNKTYYTAILASNRAPTIGTSNVPTVLGNTHNLLSAGCTGNVGQPICWNPKAPVHISDGGGPQDKAREIAVQKRLEEIHKSLFPELRYHPLALPKARGKEKIDAQTFNLLTATYSLLNKSNPNLANECWLCLPSGNPIPLAIPSNDSFLGSNLSCPIIPPLLVQPLEFMNLINASCFYSPFQNNSFDVDVGLVEFANCSTTLNISHSLCAPNSSVFVCGNNKAYTYLPSNWTGTCVLATLLPDIDIVPGDAPVPVPAIDHYLHRARRAVQFIPLLVGLGITTAVSTGTAGLGYSITQYTKLSRQLISDVQAISSTIQDLQDQVDSLAEVVLQNRRGLDLLTAEQGGICLALQEKCCFYANKSGIVRDKIKRLQEDLEKRRKEIIDNPFWTGLHGLLPYLLPLLGPLFCLLLLITFGPLIFNKIITFVKQQIDAIQAKPIQVHYHRLEQEDNGGVYLRVS.

Residues 1-22 (MTLKDIPFWRVLLIFQTARVYA) form the signal peptide. Residues 23–514 (GFGDPREAIT…TGLHGLLPYL (492 aa)) are Extracellular-facing. N-linked (GlcNAc...) asparagine; by host glycans are attached at residues Asn-117 and Asn-233. Positions 243–246 (CWLC) match the CXXC motif. 3 cysteine pairs are disulfide-bonded: Cys-243/Cys-246, Cys-243/Cys-471, and Cys-463/Cys-470. N-linked (GlcNAc...) asparagine; by host glycosylation is found at Asn-260, Asn-267, Asn-288, Asn-298, Asn-312, Asn-318, Asn-327, and Asn-345. Positions 386-406 (FIPLLVGLGITTAVSTGTAGL) are fusion peptide. Coiled-coil stretches lie at residues 407 to 457 (GYSI…LLTA) and 467 to 503 (QEKC…DNPF). The interval 446 to 462 (LQNRRGLDLLTAEQGGI) is immunosuppression. The CX6CC motif lies at 463-471 (CLALQEKCC). Residue Asn-475 is glycosylated (N-linked (GlcNAc...) asparagine; by host). Residues 515 to 535 (LPLLGPLFCLLLLITFGPLIF) traverse the membrane as a helical segment. At 536-574 (NKIITFVKQQIDAIQAKPIQVHYHRLEQEDNGGVYLRVS) the chain is on the cytoplasmic side. A YXXL motif; contains endocytosis signal motif is present at residues 558–561 (YHRL).

In terms of assembly, the mature envelope protein (Env) consists of a trimer of SU-TM heterodimers attached by a labile interchain disulfide bond. In terms of processing, specific enzymatic cleavages in vivo yield mature proteins. Envelope glycoproteins are synthesized as an inactive precursor that is N-glycosylated and processed likely by host cell furin or by a furin-like protease in the Golgi to yield the mature SU and TM proteins. The cleavage site between SU and TM requires the minimal sequence [KR]-X-[KR]-R. The R-peptide is released from the C-terminus of the cytoplasmic tail of the TM protein upon particle formation as a result of proteolytic cleavage by the viral protease. Cleavage of this peptide is required for TM to become fusogenic. Post-translationally, the CXXC motif is highly conserved across a broad range of retroviral envelope proteins. It is thought to participate in the formation of a labile disulfide bond possibly with the CX6CC motif present in the transmembrane protein. Isomerization of the intersubunit disulfide bond to an SU intrachain disulfide bond is thought to occur upon receptor recognition in order to allow membrane fusion.

The protein localises to the virion membrane. It is found in the host cell membrane. Functionally, the surface protein (SU) attaches the virus to the host cell by binding to its receptor. This interaction triggers the refolding of the transmembrane protein (TM) and is thought to activate its fusogenic potential by unmasking its fusion peptide. Fusion occurs at the host cell plasma membrane. In terms of biological role, the transmembrane protein (TM) acts as a class I viral fusion protein. Under the current model, the protein has at least 3 conformational states: pre-fusion native state, pre-hairpin intermediate state, and post-fusion hairpin state. During viral and target cell membrane fusion, the coiled coil regions (heptad repeats) assume a trimer-of-hairpins structure, positioning the fusion peptide in close proximity to the C-terminal region of the ectodomain. The formation of this structure appears to drive apposition and subsequent fusion of viral and target cell membranes. Membranes fusion leads to delivery of the nucleocapsid into the cytoplasm. The protein is Envelope glycoprotein (env) of Macaca mulatta (Rhesus macaque).